Reading from the N-terminus, the 326-residue chain is Glycerol-3-phosphate dehydrogenase [NAD(P)+] (326 aa).

Residues Trp-15, Arg-35, and Lys-107 each contribute to the NADPH site. Sn-glycerol 3-phosphate-binding residues include Lys-107, Gly-135, and Ser-137. Ala-139 lines the NADPH pocket. The sn-glycerol 3-phosphate site is built by Lys-190, Asp-243, Ser-253, Arg-254, and Asn-255. The active-site Proton acceptor is the Lys-190. Residue Arg-254 coordinates NADPH. NADPH contacts are provided by Leu-273 and Glu-275.

This sequence belongs to the NAD-dependent glycerol-3-phosphate dehydrogenase family.

The protein resides in the cytoplasm. It carries out the reaction sn-glycerol 3-phosphate + NAD(+) = dihydroxyacetone phosphate + NADH + H(+). The enzyme catalyses sn-glycerol 3-phosphate + NADP(+) = dihydroxyacetone phosphate + NADPH + H(+). The protein operates within membrane lipid metabolism; glycerophospholipid metabolism. Catalyzes the reduction of the glycolytic intermediate dihydroxyacetone phosphate (DHAP) to sn-glycerol 3-phosphate (G3P), the key precursor for phospholipid synthesis. In Bradyrhizobium diazoefficiens (strain JCM 10833 / BCRC 13528 / IAM 13628 / NBRC 14792 / USDA 110), this protein is Glycerol-3-phosphate dehydrogenase [NAD(P)+].